Here is a 357-residue protein sequence, read N- to C-terminus: MRLEVEARLRLGSFAIDAAFGSEGGVTALFGRSGSGKTSLVNIIAGLLRPDQGRVVLDGDTIADSERRLFTPVHRRRFAYVFQEARLFPHLSVRGNLAYGRWFAGAARSGPEFGRIVEMLGIGHLLDRMPSKLSGGERQRVAIGRALLAFPRLLLMDEPLAALDDARKAEILPYLERLRDETRIPIVYVSHSVAEVARLAERVVVMENGRVKASGKTAAVLNEPFPTSGPGRREAGALIEGIVDSHDEGHELTVVRAGDCLIRVPHLVAEPGQRLRLYIAARDVMLATRRPEGISALNVLPGTIVGLSSPRQGSIDVRVDCGGNVIAARVTTLSRDALDLRPGKQVHAVVKTVALDY.

Positions 1 to 233 constitute an ABC transporter domain; sequence MRLEVEARLR…PFPTSGPGRR (233 aa). ATP is bound at residue 31–38; sequence GRSGSGKT. Positions 293–357 constitute a Mop domain; that stretch reads GISALNVLPG…AVVKTVALDY (65 aa).

Belongs to the ABC transporter superfamily. Molybdate importer (TC 3.A.1.8) family. As to quaternary structure, the complex is composed of two ATP-binding proteins (ModC), two transmembrane proteins (ModB) and a solute-binding protein (ModA).

It is found in the cell inner membrane. The catalysed reaction is molybdate(out) + ATP + H2O = molybdate(in) + ADP + phosphate + H(+). In terms of biological role, part of the ABC transporter complex ModABC involved in molybdenum import. Responsible for energy coupling to the transport system. The protein is Molybdenum import ATP-binding protein ModC of Rhizobium meliloti (strain 1021) (Ensifer meliloti).